The sequence spans 397 residues: Succinyl-diaminopimelate desuccinylase (397 aa).

Residue H73 participates in Zn(2+) binding. The active site involves D75. D106 is a Zn(2+) binding site. E140 serves as the catalytic Proton acceptor. Residues E141, E169, and H366 each coordinate Zn(2+).

It belongs to the peptidase M20A family. DapE subfamily. In terms of assembly, homodimer. Requires Zn(2+) as cofactor. Co(2+) serves as cofactor.

It carries out the reaction N-succinyl-(2S,6S)-2,6-diaminopimelate + H2O = (2S,6S)-2,6-diaminopimelate + succinate. It functions in the pathway amino-acid biosynthesis; L-lysine biosynthesis via DAP pathway; LL-2,6-diaminopimelate from (S)-tetrahydrodipicolinate (succinylase route): step 3/3. Functionally, catalyzes the hydrolysis of N-succinyl-L,L-diaminopimelic acid (SDAP), forming succinate and LL-2,6-diaminopimelate (DAP), an intermediate involved in the bacterial biosynthesis of lysine and meso-diaminopimelic acid, an essential component of bacterial cell walls. In Rhizobium meliloti (strain 1021) (Ensifer meliloti), this protein is Succinyl-diaminopimelate desuccinylase.